A 126-amino-acid polypeptide reads, in one-letter code: MIRTMLQGKLHRVKVTHADLHYEGSCAIDQDFLDAAGILENEAIDIWNVTNGKRFSTYAIAAERGSRIISVNGAAAHCASVGDIVIIASFVTMPDEEARTWRPNVAYFEGDNEMKRTAKAIPVQVA.

Catalysis depends on serine 25, which acts as the Schiff-base intermediate with substrate; via pyruvic acid. At serine 25 the chain carries Pyruvic acid (Ser). A substrate-binding site is contributed by threonine 57. Tyrosine 58 (proton donor) is an active-site residue. Substrate is bound at residue 73 to 75 (GAA).

This sequence belongs to the PanD family. As to quaternary structure, heterooctamer of four alpha and four beta subunits. Requires pyruvate as cofactor. Is synthesized initially as an inactive proenzyme, which is activated by self-cleavage at a specific serine bond to produce a beta-subunit with a hydroxyl group at its C-terminus and an alpha-subunit with a pyruvoyl group at its N-terminus.

Its subcellular location is the cytoplasm. The enzyme catalyses L-aspartate + H(+) = beta-alanine + CO2. The protein operates within cofactor biosynthesis; (R)-pantothenate biosynthesis; beta-alanine from L-aspartate: step 1/1. Its function is as follows. Catalyzes the pyruvoyl-dependent decarboxylation of aspartate to produce beta-alanine. The protein is Aspartate 1-decarboxylase of Escherichia coli O6:H1 (strain CFT073 / ATCC 700928 / UPEC).